A 168-amino-acid chain; its full sequence is Large ribosomal subunit protein uL10 (168 aa).

This sequence belongs to the universal ribosomal protein uL10 family. Part of the ribosomal stalk of the 50S ribosomal subunit. The N-terminus interacts with L11 and the large rRNA to form the base of the stalk. The C-terminus forms an elongated spine to which L12 dimers bind in a sequential fashion forming a multimeric L10(L12)X complex.

In terms of biological role, forms part of the ribosomal stalk, playing a central role in the interaction of the ribosome with GTP-bound translation factors. This Paracidovorax citrulli (strain AAC00-1) (Acidovorax citrulli) protein is Large ribosomal subunit protein uL10.